Here is a 195-residue protein sequence, read N- to C-terminus: Imidazole glycerol phosphate synthase subunit HisH 2 (195 aa).

One can recognise a Glutamine amidotransferase type-1 domain in the interval 2-195; that stretch reads KIIIIDTACA…LISNFIKDIG (194 aa). Catalysis depends on Cys-77, which acts as the Nucleophile. Active-site residues include His-175 and Glu-177.

As to quaternary structure, heterodimer of HisH and HisF.

It is found in the cytoplasm. The enzyme catalyses 5-[(5-phospho-1-deoxy-D-ribulos-1-ylimino)methylamino]-1-(5-phospho-beta-D-ribosyl)imidazole-4-carboxamide + L-glutamine = D-erythro-1-(imidazol-4-yl)glycerol 3-phosphate + 5-amino-1-(5-phospho-beta-D-ribosyl)imidazole-4-carboxamide + L-glutamate + H(+). It carries out the reaction L-glutamine + H2O = L-glutamate + NH4(+). Its pathway is amino-acid biosynthesis; L-histidine biosynthesis; L-histidine from 5-phospho-alpha-D-ribose 1-diphosphate: step 5/9. IGPS catalyzes the conversion of PRFAR and glutamine to IGP, AICAR and glutamate. The HisH subunit provides the glutamine amidotransferase activity that produces the ammonia necessary to HisF for the synthesis of IGP and AICAR. This is Imidazole glycerol phosphate synthase subunit HisH 2 (hisH2) from Campylobacter jejuni subsp. jejuni serotype O:2 (strain ATCC 700819 / NCTC 11168).